We begin with the raw amino-acid sequence, 378 residues long: Protein RecA (378 aa).

79-86 (GPESSGKT) contributes to the ATP binding site.

Belongs to the RecA family.

It is found in the cytoplasm. In terms of biological role, can catalyze the hydrolysis of ATP in the presence of single-stranded DNA, the ATP-dependent uptake of single-stranded DNA by duplex DNA, and the ATP-dependent hybridization of homologous single-stranded DNAs. It interacts with LexA causing its activation and leading to its autocatalytic cleavage. The chain is Protein RecA from Streptococcus pyogenes serotype M49 (strain NZ131).